A 369-amino-acid polypeptide reads, in one-letter code: Hsc70-interacting protein (369 aa).

The segment at 38–97 (MGGKVPPATQKAKSEENTKEEKPDSKKVEEDLKADEPSSEESDLEIDKEGVIEPDTDAPQ) is disordered. Basic and acidic residues predominate over residues 49–73 (AKSEENTKEEKPDSKKVEEDLKADE). 3 TPR repeats span residues 114–147 (ANDK…NPRL), 148–181 (AILY…NPDS), and 182–215 (AQPY…DYDE). Residues 256–272 (KAREEHERAQREEEARR) show a composition bias toward basic and acidic residues. The tract at residues 256 to 300 (KAREEHERAQREEEARRQSGAQYGSFPGGFPGGMPGNFPGGMPGM) is disordered. Residues 281–300 (FPGGFPGGMPGNFPGGMPGM) are compositionally biased toward gly residues. Positions 319–358 (DPEVLAAMQDPEVMVAFQDVAQNPANMSKYQSNPKVMNLI) constitute an STI1 domain. Serine 346 is subject to Phosphoserine; by GRK5. Lysine 353 and lysine 360 each carry N6-acetyllysine.

This sequence belongs to the FAM10 family. Homotetramer. Interacts with HSC70 as well as DNAJ homologs and HSP90. Interacts (via the C-terminus 303- 319 AA) with GRK5.

It localises to the cytoplasm. One HIP oligomer binds the ATPase domains of at least two HSC70 molecules dependent on activation of the HSC70 ATPase by HSP40. Stabilizes the ADP state of HSC70 that has a high affinity for substrate protein. Through its own chaperone activity, it may contribute to the interaction of HSC70 with various target proteins. This Homo sapiens (Human) protein is Hsc70-interacting protein (ST13).